The primary structure comprises 268 residues: Chymotrypsin-C (268 aa).

Residues 1 to 16 (MLGITVLAAILACASS) form the signal peptide. Positions 17 to 29 (CGDPTFPPNLSAR) are cleaved as a propeptide — activation peptide. 5 disulfides stabilise this stretch: Cys-17–Cys-141, Cys-59–Cys-75, Cys-155–Cys-222, Cys-186–Cys-202, and Cys-212–Cys-243. Asn-25 is a glycosylation site (N-linked (GlcNAc...) asparagine). In terms of domain architecture, Peptidase S1 spans 30–267 (VVGGEDAVPN…YIDWIKEKIQ (238 aa)). His-74 serves as the catalytic Charge relay system. Residues Asn-79 and Asn-90 are each glycosylated (N-linked (GlcNAc...) asparagine). The active-site Charge relay system is the Asp-121. An N-linked (GlcNAc...) asparagine glycan is attached at Asn-182. Ser-216 (charge relay system) is an active-site residue.

The protein belongs to the peptidase S1 family. Elastase subfamily.

It carries out the reaction Preferential cleavage: Leu-|-Xaa, Tyr-|-Xaa, Phe-|-Xaa, Met-|-Xaa, Trp-|-Xaa, Gln-|-Xaa, Asn-|-Xaa.. Functionally, regulates activation and degradation of trypsinogens and procarboxypeptidases by targeting specific cleavage sites within their zymogen precursors. Has chymotrypsin-type protease activity and hypocalcemic activity. Cleaves TRY4 and TRY5 and thereby inhibits their autoactivation. This chain is Chymotrypsin-C (Ctrc), found in Mus musculus (Mouse).